Here is a 725-residue protein sequence, read N- to C-terminus: Catalase-peroxidase (725 aa).

Residues 88 to 211 constitute a cross-link (tryptophyl-tyrosyl-methioninium (Trp-Tyr) (with M-237)); that stretch reads WHSAGTYRIQ…LAASEMGLIY (124 aa). Residue His-89 is the Proton acceptor of the active site. A cross-link (tryptophyl-tyrosyl-methioninium (Tyr-Met) (with W-88)) is located at residues 211-237; the sequence is YVNPEGPGREPDPLKAAQQIRETFKRM. His-252 is a binding site for heme b.

It belongs to the peroxidase family. Peroxidase/catalase subfamily. Homodimer or homotetramer. Heme b serves as cofactor. In terms of processing, formation of the three residue Trp-Tyr-Met cross-link is important for the catalase, but not the peroxidase activity of the enzyme.

The enzyme catalyses H2O2 + AH2 = A + 2 H2O. It catalyses the reaction 2 H2O2 = O2 + 2 H2O. Bifunctional enzyme with both catalase and broad-spectrum peroxidase activity. This Symbiobacterium thermophilum (strain DSM 24528 / JCM 14929 / IAM 14863 / T) protein is Catalase-peroxidase.